The following is a 397-amino-acid chain: Myb family transcription factor PHL4 (397 aa).

The interval 1–27 (MIPNDDDDANSMKNYPLNDDDANSMKN) is disordered. The region spanning 228–288 (AAAKGRMRWT…HLQKYRTAKY (61 aa)) is the HTH myb-type domain. The segment at residues 259 to 284 (PKGVLKHMKVEGLTIFHVKSHLQKYR) is a DNA-binding region (H-T-H motif). The tract at residues 319–339 (TETLRIQMEHQKKLHEQLESL) is coiled coil. The short motif at 332 to 337 (LHEQLE) is the LHEQLE element. The tract at residues 359–397 (KQNMGFGGPEQGEKTSAKTPENGSEESESPRPKRPRNEE) is disordered. Residues 386-397 (ESPRPKRPRNEE) show a composition bias toward basic and acidic residues. Ser387 is modified (phosphoserine).

Belongs to the MYB-CC family.

It localises to the nucleus. Its function is as follows. Transcription factor involved in male gametophyte development. The protein is Myb family transcription factor PHL4 of Arabidopsis thaliana (Mouse-ear cress).